Reading from the N-terminus, the 391-residue chain is Elongation factor Tu (391 aa).

In terms of domain architecture, tr-type G spans 10-201 (KPHVNIGTIG…AVDAYIPTPE (192 aa)). The tract at residues 19–26 (GHVDHGKT) is G1. 19-26 (GHVDHGKT) is a GTP binding site. T26 is a Mg(2+) binding site. The segment at 55-59 (GITIS) is G2. The segment at 76–79 (DCPG) is G3. Residues 76–80 (DCPGH) and 131–134 (NKVD) contribute to the GTP site. The interval 131 to 134 (NKVD) is G4. Residues 169-171 (SAL) are G5.

Belongs to the TRAFAC class translation factor GTPase superfamily. Classic translation factor GTPase family. EF-Tu/EF-1A subfamily. Monomer.

The protein resides in the cytoplasm. It catalyses the reaction GTP + H2O = GDP + phosphate + H(+). In terms of biological role, GTP hydrolase that promotes the GTP-dependent binding of aminoacyl-tRNA to the A-site of ribosomes during protein biosynthesis. The polypeptide is Elongation factor Tu (Rhizobium johnstonii (strain DSM 114642 / LMG 32736 / 3841) (Rhizobium leguminosarum bv. viciae)).